Here is a 248-residue protein sequence, read N- to C-terminus: (2S)-[(R)-hydroxy(phenyl)methyl]succinyl-CoA dehydrogenase subunit BbsD (248 aa).

NAD(+) contacts are provided by serine 15, aspartate 36, aspartate 62, isoleucine 63, asparagine 89, tyrosine 153, and lysine 157. Tyrosine 153 acts as the Proton acceptor in catalysis.

Belongs to the short-chain dehydrogenases/reductases (SDR) family. In terms of assembly, heterotetramer composed of 2 inactive BbsC subunits and 2 active BbsD subunits.

The enzyme catalyses (2S)-[(R)-hydroxy(phenyl)methyl]succinyl-CoA + NAD(+) = (S)-2-benzoylsuccinyl-CoA + NADH + H(+). It participates in xenobiotic degradation; toluene degradation. With respect to regulation, activity is probably regulated by the inactive BbsC subunit. In terms of biological role, involved in an anaerobic toluene degradation pathway. Active subunit that catalyzes the oxidation of 2-(alpha-hydroxybenzyl)succinyl-CoA to 2-benzoylsuccinyl-CoA. In vitro, can catalyze the NADH-dependent reduction of the artificial substrates 2,2-dichloroacetophene and 2,4'-dichloroacetophenone. This chain is (2S)-[(R)-hydroxy(phenyl)methyl]succinyl-CoA dehydrogenase subunit BbsD, found in Thauera aromatica.